Reading from the N-terminus, the 459-residue chain is Inositol-trisphosphate 3-kinase A (459 aa).

A disordered region spans residues 1–26 (MTLPGHPTGMARPRGAGPCSPGLERA). R35, R55, and R62 each carry omega-N-methylarginine. A disordered region spans residues 49-164 (AAAGEPRARG…TSEDVGQKSH (116 aa)). The span at 116–132 (RRLSTSSLSSTGSSSLL) shows a compositional bias: low complexity. 2 positions are modified to phosphoserine: S135 and S195. ATP-binding positions include S195, K207, 247–249 (QDL), and D260. Residues K262 and R283 each contribute to the substrate site. The interval 285 to 293 (DMYKKMLAV) is calmodulin-binding. Position 310-317 (310-317 (KPRYMQWR)) interacts with substrate. ATP-binding residues include K334 and D414. K417 lines the substrate pocket.

The protein belongs to the inositol phosphokinase (IPK) family.

It localises to the cytoplasm. Its subcellular location is the cytoskeleton. The catalysed reaction is 1D-myo-inositol 1,4,5-trisphosphate + ATP = 1D-myo-inositol 1,3,4,5-tetrakisphosphate + ADP + H(+). Its activity is regulated as follows. Activated by calcium/calmodulin. Functionally, catalyzes the phosphorylation of 1D-myo-inositol 1,4,5-trisphosphate (InsP3) into 1D-myo-inositol 1,3,4,5-tetrakisphosphate and participates to the regulation of calcium homeostasis. In Rattus norvegicus (Rat), this protein is Inositol-trisphosphate 3-kinase A.